The primary structure comprises 317 residues: Glycine--tRNA ligase alpha subunit (317 aa).

The protein belongs to the class-II aminoacyl-tRNA synthetase family. In terms of assembly, tetramer of two alpha and two beta subunits.

It localises to the cytoplasm. It carries out the reaction tRNA(Gly) + glycine + ATP = glycyl-tRNA(Gly) + AMP + diphosphate. The polypeptide is Glycine--tRNA ligase alpha subunit (Pseudomonas fluorescens (strain SBW25)).